Consider the following 262-residue polypeptide: Phosphatidylglycerol--prolipoprotein diacylglyceryl transferase (262 aa).

The next 4 helical transmembrane spans lie at 17–37 (LAIH…YALG), 57–77 (LIFY…VLFY), 95–115 (GGMS…LFAH), and 119–139 (LGFF…LAAG). Residue R140 coordinates a 1,2-diacyl-sn-glycero-3-phospho-(1'-sn-glycerol). The next 3 membrane-spanning stretches (helical) occupy residues 173-193 (PSQL…LWWY), 200-220 (AGQV…LVEF), and 227-247 (FLGL…PMVL).

It belongs to the Lgt family.

It localises to the cell inner membrane. The enzyme catalyses L-cysteinyl-[prolipoprotein] + a 1,2-diacyl-sn-glycero-3-phospho-(1'-sn-glycerol) = an S-1,2-diacyl-sn-glyceryl-L-cysteinyl-[prolipoprotein] + sn-glycerol 1-phosphate + H(+). The protein operates within protein modification; lipoprotein biosynthesis (diacylglyceryl transfer). Its function is as follows. Catalyzes the transfer of the diacylglyceryl group from phosphatidylglycerol to the sulfhydryl group of the N-terminal cysteine of a prolipoprotein, the first step in the formation of mature lipoproteins. This is Phosphatidylglycerol--prolipoprotein diacylglyceryl transferase from Bordetella parapertussis (strain 12822 / ATCC BAA-587 / NCTC 13253).